The chain runs to 910 residues: Protein translocase subunit SecA (910 aa).

Residues Gln89, 107–111 (GEGKT), and Asp502 contribute to the ATP site. 4 residues coordinate Zn(2+): Cys894, Cys896, Cys905, and His906.

This sequence belongs to the SecA family. In terms of assembly, monomer and homodimer. Part of the essential Sec protein translocation apparatus which comprises SecA, SecYEG and auxiliary proteins SecDF-YajC and YidC. It depends on Zn(2+) as a cofactor.

The protein resides in the cell inner membrane. It is found in the cytoplasm. The catalysed reaction is ATP + H2O + cellular proteinSide 1 = ADP + phosphate + cellular proteinSide 2.. In terms of biological role, part of the Sec protein translocase complex. Interacts with the SecYEG preprotein conducting channel. Has a central role in coupling the hydrolysis of ATP to the transfer of proteins into and across the cell membrane, serving both as a receptor for the preprotein-SecB complex and as an ATP-driven molecular motor driving the stepwise translocation of polypeptide chains across the membrane. This chain is Protein translocase subunit SecA, found in Chelativorans sp. (strain BNC1).